The chain runs to 155 residues: uncharacterized protein (155 aa).

Positions 1-155 (MIVKYIKGDI…IVIVDWEPLL (155 aa)) constitute a Macro domain.

This is an uncharacterized protein from Escherichia coli (Bacteriophage T4).